We begin with the raw amino-acid sequence, 234 residues long: Meiotically up-regulated gene 35 protein (234 aa).

Residues 126 to 156 are compositionally biased toward basic and acidic residues; that stretch reads DSSGDLTSTDKERDVSPVSHSEKPYWDRYDL. Positions 126 to 176 are disordered; sequence DSSGDLTSTDKERDVSPVSHSEKPYWDRYDLDQPSNQDVEESRNLVQEPKH. Ser-127 and Ser-128 each carry phosphoserine. At Thr-132 the chain carries Phosphothreonine. Ser-141 carries the phosphoserine modification.

It is found in the cytoplasm. Has a role in meiosis. This is Meiotically up-regulated gene 35 protein (mug35) from Schizosaccharomyces pombe (strain 972 / ATCC 24843) (Fission yeast).